The following is a 508-amino-acid chain: Light-independent protochlorophyllide reductase subunit B (508 aa).

Aspartate 36 serves as a coordination point for [4Fe-4S] cluster. The active-site Proton donor is aspartate 282. Residue 417 to 418 (GL) participates in substrate binding.

The protein belongs to the ChlB/BchB/BchZ family. As to quaternary structure, protochlorophyllide reductase is composed of three subunits; BchL, BchN and BchB. Forms a heterotetramer of two BchB and two BchN subunits. Requires [4Fe-4S] cluster as cofactor.

It carries out the reaction chlorophyllide a + oxidized 2[4Fe-4S]-[ferredoxin] + 2 ADP + 2 phosphate = protochlorophyllide a + reduced 2[4Fe-4S]-[ferredoxin] + 2 ATP + 2 H2O. It participates in porphyrin-containing compound metabolism; bacteriochlorophyll biosynthesis (light-independent). Its function is as follows. Component of the dark-operative protochlorophyllide reductase (DPOR) that uses Mg-ATP and reduced ferredoxin to reduce ring D of protochlorophyllide (Pchlide) to form chlorophyllide a (Chlide). This reaction is light-independent. The NB-protein (BchN-BchB) is the catalytic component of the complex. The chain is Light-independent protochlorophyllide reductase subunit B from Methylocella silvestris (strain DSM 15510 / CIP 108128 / LMG 27833 / NCIMB 13906 / BL2).